The primary structure comprises 425 residues: Histone-binding protein RBBP7 (425 aa).

Alanine 2 carries the N-acetylalanine modification. Serine 3 is modified (phosphoserine). Lysine 4 carries the N6-acetyllysine; alternate modification. Lysine 4 is covalently cross-linked (Glycyl lysine isopeptide (Lys-Gly) (interchain with G-Cter in SUMO2); alternate). Residue lysine 4 forms a Glycyl lysine isopeptide (Lys-Gly) (interchain with G-Cter in ubiquitin); alternate linkage. Threonine 10 carries the phosphothreonine modification. Phosphoserine is present on residues glutamate 13 and serine 95. WD repeat units lie at residues 47 to 122 (QWLP…KINH), 128 to 173 (RARY…LRLR), 181 to 217 (GLSW…KIVD), 228 to 269 (VVED…HLVD), 275 to 312 (VNCL…LHTF), 318 to 369 (EIFQ…LFIH), and 376 to 403 (ISDF…IWQM). Lysine 101 is covalently cross-linked (Glycyl lysine isopeptide (Lys-Gly) (interchain with G-Cter in SUMO2)). Lysine 119 carries the N6-acetyllysine modification. Lysine 155 is covalently cross-linked (Glycyl lysine isopeptide (Lys-Gly) (interchain with G-Cter in SUMO2)). Lysine 159 carries the post-translational modification N6-acetyllysine; alternate. A Glycyl lysine isopeptide (Lys-Gly) (interchain with G-Cter in SUMO2); alternate cross-link involves residue lysine 159. At serine 354 the chain carries Phosphoserine.

The protein belongs to the WD repeat RBAP46/RBAP48/MSI1 family. Binds directly to helix 1 of the histone fold of histone H4, a region that is not accessible when H4 is in chromatin. Subunit of the type B histone acetyltransferase (HAT) complex, composed of RBBP7 and HAT1. Subunit of the core histone deacetylase (HDAC) complex, which is composed of HDAC1, HDAC2, RBBP4 and RBBP7. The core HDAC complex associates with SIN3A, ARID4B/SAP180, SAP18, SAP30, SAP130, SUDS3/SAP45 and possibly ARID4A/RBP1 and ING1 to form the SIN3 HDAC complex. Component of the nucleosome remodeling and deacetylase (NuRD) repressor complex, composed of core proteins MTA1, MTA2, MTA3, RBBP4, RBBP7, HDAC1, HDAC2, MBD2, MBD3, and peripherally associated proteins CDK2AP1, CDK2AP2, GATAD2A, GATAD2B, CHD3, CHD4 and CHD5. The exact stoichiometry of the NuRD complex is unknown, and some subunits such as MBD2 and MBD3, GATAD2A and GATAD2B, and CHD3, CHD4 and CHD5 define mutually exclusive NuRD complexes. The NuRD complex may interact with MBD3L1. The NuRD complex may interact with MBD3L2. Subunit of the PRC2/EED-EZH2 complex, which is composed of at least EED, EZH2, RBBP4, RBBP7 and SUZ12. The PRC2/EED-EZH2 complex may also associate with HDAC1. Component of the NURF-1 ISWI chromatin remodeling complex (also called the nucleosome-remodeling factor (NURF) complex) at least composed of SMARCA1 (isoform 2), BPTF, RBBP4 and RBBP7. Within the complex interacts with isoform 2 of SMARCA1. Component of the BPFT-SMARCA1 complex at least composed of SMARCA1 (isoform 1), BPFT, RBBP4 and RBBP7; the complex is catalytically inactive and does not remodel chromatin. Within the complex interacts with isoform 1 of SMARCA1. Interacts with BRCA1. Interacts with CDK2AP1. Interacts with CENPA. Interacts with CHD3. Interacts with CHD4. Interacts with CREBBP, and this interaction may be enhanced by the binding of phosphorylated CREB1 to CREBBP. Interacts with HDAC7. Interacts with MTA1. Interacts with PWWP2B. Interacts with RB1 (via viral protein-binding domain). Interacts with SUV39H1.

The protein localises to the nucleus. In terms of biological role, core histone-binding subunit that may target chromatin remodeling factors, histone acetyltransferases and histone deacetylases to their histone substrates in a manner that is regulated by nucleosomal DNA. Component of several complexes which regulate chromatin metabolism. These include the type B histone acetyltransferase (HAT) complex, which is required for chromatin assembly following DNA replication; the core histone deacetylase (HDAC) complex, which promotes histone deacetylation and consequent transcriptional repression; the nucleosome remodeling and histone deacetylase complex (the NuRD complex), which promotes transcriptional repression by histone deacetylation and nucleosome remodeling; and the PRC2/EED-EZH2 complex, which promotes repression of homeotic genes during development; and the NURF (nucleosome remodeling factor) complex. This chain is Histone-binding protein RBBP7 (RBBP7), found in Homo sapiens (Human).